Reading from the N-terminus, the 224-residue chain is Inhibitor of apoptosis protein (224 aa).

Residues 29-92 (VDARNQSFAI…AFWSRNCGFM (64 aa)) form a BIR repeat. Cys62, Cys65, His82, and Cys89 together coordinate Zn(2+).

This sequence belongs to the asfivirus IAP family. Interacts with subunit p17 of host CASP3.

The protein resides in the host cytoplasm. Its subcellular location is the virion. Functionally, prevents apoptosis of host cell by inhibiting caspase-3/CASP3 activation to promote the viral replication. Also induces the activation of host NF-kappaB. The polypeptide is Inhibitor of apoptosis protein (p27) (African swine fever virus (isolate Tick/South Africa/Wildebeeslaagte M1/1996) (ASFV)).